The sequence spans 288 residues: Protoheme IX farnesyltransferase (288 aa).

Helical transmembrane passes span 16–36, 37–57, 88–108, 111–131, 138–158, 162–182, 210–230, 236–256, and 265–285; these read VWSLLVFVGAIGAVIAIPYFN, LHYISLIVLATIAVMLGSMGA, INGLLFGLVLMFLSIAILAAF, LYAALFMGIGLFDNVFIYSYL, WNIILGGFSGGFPVVIGWYTV, FSILPWFLFLLVVVWIPIHVW, AICISSAAIILFAFSIIPAFF, VYMILASAIAVPMIFYSIVFV, and LKLFIYSSPYLAIIFVLVLIF.

This sequence belongs to the UbiA prenyltransferase family. Protoheme IX farnesyltransferase subfamily.

It is found in the cell membrane. It catalyses the reaction heme b + (2E,6E)-farnesyl diphosphate + H2O = Fe(II)-heme o + diphosphate. It participates in porphyrin-containing compound metabolism; heme O biosynthesis; heme O from protoheme: step 1/1. Its function is as follows. Converts heme B (protoheme IX) to heme O by substitution of the vinyl group on carbon 2 of heme B porphyrin ring with a hydroxyethyl farnesyl side group. In Thermoplasma acidophilum (strain ATCC 25905 / DSM 1728 / JCM 9062 / NBRC 15155 / AMRC-C165), this protein is Protoheme IX farnesyltransferase.